Consider the following 121-residue polypeptide: Parathyroid hormone 4 (121 aa).

A signal peptide spans 1–24 (MLKMQRSQQRVALMMLMVVAAVHC). The propeptide occupies 25–29 (QESES). The tract at residues 77 to 97 (RSRGAQLYSQPGREESSGGQK) is disordered.

The protein belongs to the parathyroid hormone family. Specifically expressed in a bilateral cluster of neurons in the dorsal region of the periventricular hypothalamus. Their axons project through the midbrain and hindbrain and down the spinal cord.

It localises to the secreted. Its function is as follows. Neuroendocrine peptide which is produced by a subset of neurons in the hypothalamus. Activates the G-protein coupled receptors pth1ra, pth1rb and pth2r with similar affinity. Receptor binding stimulates intracellular cAMP production. Plays a role in bone mineralization by regulating expression of factors involved in phosphate homeostasis. Important for embryonic bone development. The sequence is that of Parathyroid hormone 4 from Danio rerio (Zebrafish).